The primary structure comprises 418 residues: Putative competence-damage inducible protein (418 aa).

The protein belongs to the CinA family.

The sequence is that of Putative competence-damage inducible protein from Streptococcus pneumoniae serotype 2 (strain D39 / NCTC 7466).